An 86-amino-acid polypeptide reads, in one-letter code: Small ribosomal subunit protein uS17 (86 aa).

Belongs to the universal ribosomal protein uS17 family. As to quaternary structure, part of the 30S ribosomal subunit.

Functionally, one of the primary rRNA binding proteins, it binds specifically to the 5'-end of 16S ribosomal RNA. This is Small ribosomal subunit protein uS17 from Dehalococcoides mccartyi (strain ATCC BAA-2266 / KCTC 15142 / 195) (Dehalococcoides ethenogenes (strain 195)).